Here is a 510-residue protein sequence, read N- to C-terminus: Glutamate--tRNA ligase (510 aa).

Positions 15–25 match the 'HIGH' region motif; it reads PSPTGDPHVGT. A 'KMSKS' region motif is present at residues 256–260; sequence KISKR. Lys259 provides a ligand contact to ATP.

It belongs to the class-I aminoacyl-tRNA synthetase family. Glutamate--tRNA ligase type 1 subfamily. As to quaternary structure, monomer.

Its subcellular location is the cytoplasm. The catalysed reaction is tRNA(Glu) + L-glutamate + ATP = L-glutamyl-tRNA(Glu) + AMP + diphosphate. Functionally, catalyzes the attachment of glutamate to tRNA(Glu) in a two-step reaction: glutamate is first activated by ATP to form Glu-AMP and then transferred to the acceptor end of tRNA(Glu). This chain is Glutamate--tRNA ligase, found in Fusobacterium nucleatum subsp. nucleatum (strain ATCC 25586 / DSM 15643 / BCRC 10681 / CIP 101130 / JCM 8532 / KCTC 2640 / LMG 13131 / VPI 4355).